The following is a 629-amino-acid chain: tRNA uridine 5-carboxymethylaminomethyl modification enzyme MnmG (629 aa).

FAD contacts are provided by residues 14 to 19, Val126, and Ser181; that span reads GAGHAG. An NAD(+)-binding site is contributed by 273–287; sequence GPRYCPSIEDKVVRF. FAD is bound at residue Gln370.

The protein belongs to the MnmG family. Homodimer. Heterotetramer of two MnmE and two MnmG subunits. It depends on FAD as a cofactor.

The protein resides in the cytoplasm. Functionally, NAD-binding protein involved in the addition of a carboxymethylaminomethyl (cmnm) group at the wobble position (U34) of certain tRNAs, forming tRNA-cmnm(5)s(2)U34. This chain is tRNA uridine 5-carboxymethylaminomethyl modification enzyme MnmG, found in Bacillus cereus (strain ATCC 14579 / DSM 31 / CCUG 7414 / JCM 2152 / NBRC 15305 / NCIMB 9373 / NCTC 2599 / NRRL B-3711).